A 30-amino-acid polypeptide reads, in one-letter code: Ornithine carbamoyltransferase (30 aa).

The protein belongs to the aspartate/ornithine carbamoyltransferase superfamily. OTCase family.

Its subcellular location is the cytoplasm. The catalysed reaction is carbamoyl phosphate + L-ornithine = L-citrulline + phosphate + H(+). It participates in amino-acid biosynthesis; L-arginine biosynthesis; L-arginine from L-ornithine and carbamoyl phosphate: step 1/3. Functionally, has vitronectin and fibronectin-binding activity. This is Ornithine carbamoyltransferase (argF) from Staphylococcus epidermidis.